Reading from the N-terminus, the 183-residue chain is 2-C-methyl-D-erythritol 2,4-cyclodiphosphate synthase (183 aa).

A divalent metal cation-binding residues include aspartate 10 and histidine 12. Residues 10–12 and 38–39 each bind 4-CDP-2-C-methyl-D-erythritol 2-phosphate; these read DVH and HS. Residue histidine 46 coordinates a divalent metal cation. 4-CDP-2-C-methyl-D-erythritol 2-phosphate is bound by residues 60–62 and 65–69; these read DIG and FPDTD.

The protein belongs to the IspF family. In terms of assembly, homotrimer. A divalent metal cation serves as cofactor.

The catalysed reaction is 4-CDP-2-C-methyl-D-erythritol 2-phosphate = 2-C-methyl-D-erythritol 2,4-cyclic diphosphate + CMP. It functions in the pathway isoprenoid biosynthesis; isopentenyl diphosphate biosynthesis via DXP pathway; isopentenyl diphosphate from 1-deoxy-D-xylulose 5-phosphate: step 4/6. Its function is as follows. Involved in the biosynthesis of isopentenyl diphosphate (IPP) and dimethylallyl diphosphate (DMAPP), two major building blocks of isoprenoid compounds. Catalyzes the conversion of 4-diphosphocytidyl-2-C-methyl-D-erythritol 2-phosphate (CDP-ME2P) to 2-C-methyl-D-erythritol 2,4-cyclodiphosphate (ME-CPP) with a corresponding release of cytidine 5-monophosphate (CMP). This Verminephrobacter eiseniae (strain EF01-2) protein is 2-C-methyl-D-erythritol 2,4-cyclodiphosphate synthase.